Reading from the N-terminus, the 619-residue chain is DNA mismatch repair protein MutL (619 aa).

The span at 368 to 378 (VDEPKQVDEPK) shows a compositional bias: basic and acidic residues. The segment at 368–403 (VDEPKQVDEPKQSSPVQEPKEEIPSFLPTVESKQND) is disordered.

It belongs to the DNA mismatch repair MutL/HexB family.

This protein is involved in the repair of mismatches in DNA. It is required for dam-dependent methyl-directed DNA mismatch repair. May act as a 'molecular matchmaker', a protein that promotes the formation of a stable complex between two or more DNA-binding proteins in an ATP-dependent manner without itself being part of a final effector complex. This Geobacillus sp. (strain WCH70) protein is DNA mismatch repair protein MutL.